Reading from the N-terminus, the 1572-residue chain is E3 ubiquitin-protein ligase HECW2 (1572 aa).

S48 carries the post-translational modification Phosphoserine. One can recognise a C2 domain in the interval 167–301; it reads GAEGMEGGAS…QAIGDQMLSY (135 aa). Disordered regions lie at residues 341 to 452 and 489 to 796; these read VNSV…SSFP and IMFS…PSVR. Over residues 400 to 410 the composition is skewed to low complexity; it reads TSTSSRTSPPR. The span at 518–532 shows a compositional bias: basic and acidic residues; the sequence is ASTHEAASFEDKPEN. Polar residues-rich tracts occupy residues 572 to 588, 597 to 614, 643 to 664, and 688 to 703; these read EVDQ…SDAS, ETES…SSET, SSCN…SSLE, and PTSS…SVCT. An interaction with TP73 region spans residues 737–1068; it reads WQRRGSLEGA…PRPSSTFNTV (332 aa). Positions 744-776 are enriched in low complexity; sequence EGAAAAAESPPQEEGSAGEAQGTCEGATAQEEG. One can recognise a WW 1 domain in the interval 807–840; it reads EALPPNWEARIDSHGRIFYVDHVNRTTTWQRPTA. Residues 847–874 adopt a coiled-coil conformation; that stretch reads LQRSNSIQQMEQLNRRYQSIRRTMTNER. S852 and S909 each carry phosphoserine. The WW 2 domain maps to 985-1018; sequence LELPRGWEMKHDHQGKAFFVDHNSRTTTFIDPRL. Disordered stretches follow at residues 1024–1069 and 1161–1187; these read RPTS…NTVS and CQSP…RAPA. Positions 1031 to 1040 are enriched in basic residues; sequence HRQHLTRQRS. Polar residues predominate over residues 1161-1181; that stretch reads CQSPRGSPVSSPQNSPGTQRA. S1175 bears the Phosphoserine mark. In terms of domain architecture, HECT spans 1237–1572; sequence SRKDLQRNKL…VEETSTFGLE (336 aa). The active-site Glycyl thioester intermediate is C1540.

As to quaternary structure, interacts with TP73. Interacts with FZR1. Post-translationally, ubiquitinated and degraded during mitotic exit by APC/C-Cdh1. In terms of tissue distribution, predominantly expressed in adult brain, lung and heart.

The protein localises to the cytoplasm. It localises to the cytoskeleton. It is found in the spindle. It catalyses the reaction S-ubiquitinyl-[E2 ubiquitin-conjugating enzyme]-L-cysteine + [acceptor protein]-L-lysine = [E2 ubiquitin-conjugating enzyme]-L-cysteine + N(6)-ubiquitinyl-[acceptor protein]-L-lysine.. The protein operates within protein modification; protein ubiquitination. Its function is as follows. E3 ubiquitin-protein ligase that mediates ubiquitination of TP73. Acts to stabilize TP73 and enhance activation of transcription by TP73. Involved in the regulation of mitotic metaphase/anaphase transition. The protein is E3 ubiquitin-protein ligase HECW2 (HECW2) of Homo sapiens (Human).